The sequence spans 48 residues: Protein TUNAR (48 aa).

A disordered region spans residues 1-20 (MVITSGNDEDRGGQEKESKE). Positions 8-20 (DEDRGGQEKESKE) are enriched in basic and acidic residues. Residues 24–44 (LAMLGIIGTILNLIVIIFVYI) traverse the membrane as a helical segment.

Interacts with ATPase ATP2A2/SERCA2. Interacts with ATPase ATP2A3/SERCA3; the interaction occurs at low levels in low glucose conditions and is increased by high glucose levels. In terms of tissue distribution, in the adult, expressed in Purkinje cells in the cerebellum, in motor neurons and interneurons in the spinal cord and in neurons of the cortex, hippocampus and thalamus (at protein level). Also detected in the developing cortex, hippocampus and thalamus at embryonic day E15.5 (at protein level).

The protein localises to the endoplasmic reticulum membrane. The protein resides in the extracellular vesicle membrane. Functionally, in neurons, plays a role in the regulation of intracellular Ca(2+), possibly by acting as an activator of ATP2A2/SERCA2, thus increasing the efficiency with which Ca(2+) is removed from the cytoplasm. Inhibits differentiation of embryonic stem cells into neurons and inhibits neurite outgrowth, likely as a result of its role in intracellular Ca(2+) regulation. In pancreatic beta cells, lowers Ca(2+) levels in the endoplasmic reticulum and enhances glucose-stimulated insulin secretion. This Mus musculus (Mouse) protein is Protein TUNAR.